The chain runs to 564 residues: 2-succinyl-5-enolpyruvyl-6-hydroxy-3-cyclohexene-1-carboxylate synthase (564 aa).

The protein belongs to the TPP enzyme family. MenD subfamily. In terms of assembly, homodimer. The cofactor is Mg(2+). Requires Mn(2+) as cofactor. Thiamine diphosphate is required as a cofactor.

It carries out the reaction isochorismate + 2-oxoglutarate + H(+) = 5-enolpyruvoyl-6-hydroxy-2-succinyl-cyclohex-3-ene-1-carboxylate + CO2. Its pathway is quinol/quinone metabolism; 1,4-dihydroxy-2-naphthoate biosynthesis; 1,4-dihydroxy-2-naphthoate from chorismate: step 2/7. It functions in the pathway quinol/quinone metabolism; menaquinone biosynthesis. In terms of biological role, catalyzes the thiamine diphosphate-dependent decarboxylation of 2-oxoglutarate and the subsequent addition of the resulting succinic semialdehyde-thiamine pyrophosphate anion to isochorismate to yield 2-succinyl-5-enolpyruvyl-6-hydroxy-3-cyclohexene-1-carboxylate (SEPHCHC). This Vibrio vulnificus (strain YJ016) protein is 2-succinyl-5-enolpyruvyl-6-hydroxy-3-cyclohexene-1-carboxylate synthase.